Here is an 85-residue protein sequence, read N- to C-terminus: ATP synthase subunit c (85 aa).

2 consecutive transmembrane segments (helical) span residues 1-21 (MLAW…ALVG) and 53-73 (LLFA…VALI).

It belongs to the ATPase C chain family. F-type ATPases have 2 components, F(1) - the catalytic core - and F(0) - the membrane proton channel. F(1) has five subunits: alpha(3), beta(3), gamma(1), delta(1), epsilon(1). F(0) has three main subunits: a(1), b(2) and c(10-14). The alpha and beta chains form an alternating ring which encloses part of the gamma chain. F(1) is attached to F(0) by a central stalk formed by the gamma and epsilon chains, while a peripheral stalk is formed by the delta and b chains.

The protein resides in the cell inner membrane. In terms of biological role, f(1)F(0) ATP synthase produces ATP from ADP in the presence of a proton or sodium gradient. F-type ATPases consist of two structural domains, F(1) containing the extramembraneous catalytic core and F(0) containing the membrane proton channel, linked together by a central stalk and a peripheral stalk. During catalysis, ATP synthesis in the catalytic domain of F(1) is coupled via a rotary mechanism of the central stalk subunits to proton translocation. Key component of the F(0) channel; it plays a direct role in translocation across the membrane. A homomeric c-ring of between 10-14 subunits forms the central stalk rotor element with the F(1) delta and epsilon subunits. This chain is ATP synthase subunit c, found in Dictyoglomus turgidum (strain DSM 6724 / Z-1310).